Reading from the N-terminus, the 364-residue chain is Tyrosine--tRNA ligase (364 aa).

L-tyrosine is bound at residue Y39. Residues H49 and W52 each coordinate ATP. Residues Y165, Q169, D172, and Q187 each coordinate L-tyrosine. A 'KMSKS' region motif is present at residues 238–242 (KMSKS). K241 is an ATP binding site.

The protein belongs to the class-I aminoacyl-tRNA synthetase family. TyrS type 4 subfamily. As to quaternary structure, homodimer.

Its subcellular location is the cytoplasm. It carries out the reaction tRNA(Tyr) + L-tyrosine + ATP = L-tyrosyl-tRNA(Tyr) + AMP + diphosphate + H(+). In terms of biological role, catalyzes the attachment of tyrosine to tRNA(Tyr) in a two-step reaction: tyrosine is first activated by ATP to form Tyr-AMP and then transferred to the acceptor end of tRNA(Tyr). This chain is Tyrosine--tRNA ligase, found in Aeropyrum pernix (strain ATCC 700893 / DSM 11879 / JCM 9820 / NBRC 100138 / K1).